Reading from the N-terminus, the 273-residue chain is 3-methyl-2-oxobutanoate hydroxymethyltransferase (273 aa).

Residues Asp53 and Asp92 each contribute to the Mg(2+) site. 3-methyl-2-oxobutanoate contacts are provided by residues 53–54 (DS), Asp92, and Lys122. Mg(2+) is bound at residue Glu124. Glu191 (proton acceptor) is an active-site residue.

The protein belongs to the PanB family. Homodecamer; pentamer of dimers. Mg(2+) serves as cofactor.

It is found in the cytoplasm. The catalysed reaction is 3-methyl-2-oxobutanoate + (6R)-5,10-methylene-5,6,7,8-tetrahydrofolate + H2O = 2-dehydropantoate + (6S)-5,6,7,8-tetrahydrofolate. The protein operates within cofactor biosynthesis; (R)-pantothenate biosynthesis; (R)-pantoate from 3-methyl-2-oxobutanoate: step 1/2. In terms of biological role, catalyzes the reversible reaction in which hydroxymethyl group from 5,10-methylenetetrahydrofolate is transferred onto alpha-ketoisovalerate to form ketopantoate. The sequence is that of 3-methyl-2-oxobutanoate hydroxymethyltransferase from Parabacteroides distasonis (strain ATCC 8503 / DSM 20701 / CIP 104284 / JCM 5825 / NCTC 11152).